A 143-amino-acid polypeptide reads, in one-letter code: Large ribosomal subunit protein uL11 (143 aa).

Belongs to the universal ribosomal protein uL11 family. In terms of assembly, part of the ribosomal stalk of the 50S ribosomal subunit. Interacts with L10 and the large rRNA to form the base of the stalk. L10 forms an elongated spine to which L12 dimers bind in a sequential fashion forming a multimeric L10(L12)X complex. In terms of processing, one or more lysine residues are methylated.

Forms part of the ribosomal stalk which helps the ribosome interact with GTP-bound translation factors. The chain is Large ribosomal subunit protein uL11 from Dechloromonas aromatica (strain RCB).